A 501-amino-acid polypeptide reads, in one-letter code: Putative zinc metalloprotease TM_0890 (501 aa).

A Zn(2+)-binding site is contributed by histidine 17. Residue glutamate 18 is part of the active site. A Zn(2+)-binding site is contributed by histidine 21. 4 helical membrane-spanning segments follow: residues 93–115 (FLITLAGPLFSILAGYLLFLPIT), 401–420 (VQTGQIVGVVGLAGVISAAS), 427–449 (VLTVVAVITISLGVLNLLPLPAL), and 474–496 (IIHFLGFIFLMILFLYITFLDIG). The region spanning 96–180 (TLAGPLFSIL…LVIIRNGEKK (85 aa)) is the PDZ domain.

The protein belongs to the peptidase M50B family. Requires Zn(2+) as cofactor.

Its subcellular location is the cell inner membrane. In Thermotoga maritima (strain ATCC 43589 / DSM 3109 / JCM 10099 / NBRC 100826 / MSB8), this protein is Putative zinc metalloprotease TM_0890.